A 1094-amino-acid polypeptide reads, in one-letter code: RecBCD enzyme subunit RecB (1094 aa).

Residues 1–326 (MDRFELLGPL…YTLGVNWRSD (326 aa)) enclose the UvrD-like helicase ATP-binding domain. The interval 1-713 (MDRFELLGPL…LLRGRRPGQS (713 aa)) is DNA-binding and helicase activity, interacts with RecC. 21 to 28 (ASAGTGKT) lines the ATP pocket. Positions 357–613 (AGHRLASAPR…QIMTVFVAKG (257 aa)) constitute a UvrD-like helicase C-terminal domain. Residues 775–1094 (TWRRTSYSDL…DLLDRGRLQS (320 aa)) form a nuclease activity, interacts with RecD and RecA region. Mg(2+)-binding residues include His-838, Asp-975, and Asp-989. The active-site For nuclease activity is Asp-989.

Belongs to the helicase family. UvrD subfamily. In terms of assembly, heterotrimer of RecB, RecC and RecD. All subunits contribute to DNA-binding. Interacts with RecA. It depends on Mg(2+) as a cofactor.

It carries out the reaction Exonucleolytic cleavage (in the presence of ATP) in either 5'- to 3'- or 3'- to 5'-direction to yield 5'-phosphooligonucleotides.. The enzyme catalyses Couples ATP hydrolysis with the unwinding of duplex DNA by translocating in the 3'-5' direction.. The catalysed reaction is ATP + H2O = ADP + phosphate + H(+). A helicase/nuclease that prepares dsDNA breaks (DSB) for recombinational DNA repair. Binds to DSBs and unwinds DNA via a highly rapid and processive ATP-dependent bidirectional helicase activity. In the holoenzyme this subunit contributes ATPase, 3'-5' helicase, exonuclease activity and loads RecA onto ssDNA. Unlike the case in E.coli, suppresses RecA-dependent homologous recombination, is instead required for single-strand annealing pathway repair of DSB. The polypeptide is RecBCD enzyme subunit RecB (Mycobacterium tuberculosis (strain CDC 1551 / Oshkosh)).